Consider the following 51-residue polypeptide: Large ribosomal subunit protein bL33 (51 aa).

This sequence belongs to the bacterial ribosomal protein bL33 family.

In Nitrosospira multiformis (strain ATCC 25196 / NCIMB 11849 / C 71), this protein is Large ribosomal subunit protein bL33.